Here is a 312-residue protein sequence, read N- to C-terminus: Acetaldehyde dehydrogenase (312 aa).

12-15 (SGNI) is a binding site for NAD(+). Residue C132 is the Acyl-thioester intermediate of the active site. NAD(+) is bound by residues 163 to 171 (SAGPGTRAN) and N290.

This sequence belongs to the acetaldehyde dehydrogenase family. In terms of assembly, heterotetramer composed of two DmpG (aldolase) and two DmpF (dehydrogenase) subunits, which allows a direct channeling of acetaldehyde between the two active sites.

The catalysed reaction is acetaldehyde + NAD(+) + CoA = acetyl-CoA + NADH + H(+). It participates in aromatic compound metabolism; phenol degradation. Its activity is regulated as follows. Is not activated by Mn(2+), Mg(2+), Ca(2+), Zn(2+) or Co(2+). In terms of biological role, catalyzes the conversion of acetaldehyde to acetyl-CoA, using NAD(+) and coenzyme A. Can also act on propanal and butanal to form propanoyl-CoA and butanoyl-CoA, respectively. Is the final enzyme in the meta-cleavage pathway for the degradation of aromatic compounds such as phenols, cresols and catechols. NADP(+) can replace NAD(+) but the rate of reaction is much slower. The protein is Acetaldehyde dehydrogenase (dmpF) of Pseudomonas sp. (strain CF600).